Here is a 265-residue protein sequence, read N- to C-terminus: Silaffin-1 (265 aa).

An N-terminal signal peptide occupies residues 1–19 (MKLTAIFPLLFTAVGYCAA). A propeptide spans 20 to 107 (QSIADLAAAN…DSEEEELRIL (88 aa)) (acidic). Residues 37–106 (SAQLISADSS…EDSEEEELRI (70 aa)) are disordered. Positions 51–90 (DSSVESVDAASSDVSGSSVESVDVSGSSLESVDVSGSSLE) are enriched in low complexity. Over residues 91–103 (SVDDSSEDSEEEE) the composition is skewed to acidic residues. An R1; atypical repeat occupies 108–140 (SSKKSGSYYSYGTKKSGSYSGYSTKKSASRRIL). The 7 X 19 AA repeat of S-S-K-K-S-G-S-Y-S-G-S-K-G-S-K-R-R-[IL]-L stretch occupies residues 108 to 257 (SSKKSGSYYS…GSKGSKRRIL (150 aa)). K110 carries the post-translational modification N6-poly(methylaminopropyl)lysine. K111 is modified (N6,N6-dimethyllysine). Residues 122 to 133 (KSGSYSGYSTKK) show a composition bias toward low complexity. Positions 122 to 265 (KSGSYSGYST…ILSGGLRGSM (144 aa)) are disordered. The propeptide occupies 137-140 (RRIL). One copy of the R2; atypical repeat lies at 141-162 (SSKKSGSYSGYSTKKSGSRRIL). Low complexity predominate over residues 142–155 (SKKSGSYSGYSTKK). At K143 the chain carries N6-poly(methylaminopropyl)lysine. K144 is subject to N6,N6-dimethyllysine. Position 154 is an N6-poly(methylaminopropyl)lysine (K154). K155 is subject to N6,N6-dimethyllysine. A propeptide spanning residues 159-162 (RRIL) is cleaved from the precursor. Phosphoserine occurs at positions 163 and 164. Residues 163 to 181 (SSKKSGSYSGSKGSKRRIL) form an R3 repeat. Positions 164 to 174 (SKKSGSYSGSK) are enriched in low complexity. K165 is subject to N6-poly(methylaminopropyl)lysine. K166 bears the N6,N6-dimethyllysine mark. Phosphoserine occurs at positions 167, 169, 171, and 173. Position 174 is an N6,N6,N6-trimethyl-5-hydroxylysine (K174). Position 176 is a phosphoserine (S176). K177 is modified (N6-poly(methylaminopropyl)lysine). Residues 178–181 (RRIL) constitute a propeptide that is removed on maturation. 2 positions are modified to phosphoserine: S182 and S183. Residues 182–200 (SSKKSGSYSGSKGSKRRNL) form an R4 repeat. The segment covering 183 to 193 (SKKSGSYSGSK) has biased composition (low complexity). K184 is modified (N6-poly(methylaminopropyl)lysine). K185 is subject to N6,N6-dimethyllysine. A phosphoserine mark is found at S186, S188, S190, and S192. Residue K193 is modified to N6,N6,N6-trimethyl-5-hydroxylysine. The residue at position 195 (S195) is a Phosphoserine. The residue at position 196 (K196) is an N6-poly(methylaminopropyl)lysine. Positions 197–200 (RRNL) are excised as a propeptide. S201 and S202 each carry phosphoserine. Residues 201 to 219 (SSKKSGSYSGSKGSKRRIL) form an R5 repeat. The span at 202–212 (SKKSGSYSGSK) shows a compositional bias: low complexity. K203 bears the N6-poly(methylaminopropyl)lysine mark. At K204 the chain carries N6,N6-dimethyllysine. 4 positions are modified to phosphoserine: S205, S207, S209, and S211. At K212 the chain carries N6,N6,N6-trimethyl-5-hydroxylysine. Residue S214 is modified to Phosphoserine. Residue K215 is modified to N6-poly(methylaminopropyl)lysine. Residues 216–219 (RRIL) constitute a propeptide that is removed on maturation. S220 and S221 each carry phosphoserine. The stretch at 220-238 (SSKKSGSYSGSKGSKRRNL) is one R6 repeat. Residues 221-231 (SKKSGSYSGSK) show a composition bias toward low complexity. K222 is modified (N6-poly(methylaminopropyl)lysine). The residue at position 223 (K223) is an N6,N6-dimethyllysine. 4 positions are modified to phosphoserine: S224, S226, S228, and S230. Position 231 is an N6,N6,N6-trimethyl-5-hydroxylysine (K231). Position 233 is a phosphoserine (S233). N6-poly(methylaminopropyl)lysine is present on K234. A propeptide spanning residues 235–238 (RRNL) is cleaved from the precursor. 2 positions are modified to phosphoserine: S239 and S240. An R7 repeat occupies 239–257 (SSKKSGSYSGSKGSKRRIL). The segment covering 240–250 (SKKSGSYSGSK) has biased composition (low complexity). K241 carries the post-translational modification N6-poly(methylaminopropyl)lysine. K242 bears the N6,N6-dimethyllysine mark. A phosphoserine mark is found at S243, S245, S247, and S249. K250 carries the post-translational modification N6,N6,N6-trimethyl-5-hydroxylysine. Residue S252 is modified to Phosphoserine. K253 is subject to N6-poly(methylaminopropyl)lysine. The propeptide occupies 254 to 265 (RRILSGGLRGSM).

In terms of assembly, silaffin-1A peptides form large aggregates via electrostatic interactions due to intermolecular interactions between the negatively charged phosphate groups and the polyamine moieties. In terms of processing, N6-polymethylaminopropylated. Two lysine residues of each peptide bears 6 to 11 repeats of methyl-propylamine, which gives a possible template for nucleation, and may also control the silica colloid size within the silica deposition vesicle (SDV). Phosphorylated. All serine residues of the Silaffin-1A1 peptide are phosphorylated. Only minor amounts of the Silaffin-1A2 peptide are phosphorylated. Phosphorylation is essential for the activity. It may represent a source of anions required for silica formation of diatoms.

Its function is as follows. Catalyzes the polymerization of silica spheres from a silicilic acid solution. It therefore plays a central role in the formation of silica cell wall of diatoms. In Cylindrotheca fusiformis (Marine diatom), this protein is Silaffin-1 (SIL1).